The following is a 131-amino-acid chain: Small ribosomal subunit protein uS8 (131 aa).

Belongs to the universal ribosomal protein uS8 family. In terms of assembly, part of the 30S ribosomal subunit. Contacts proteins S5 and S12.

Functionally, one of the primary rRNA binding proteins, it binds directly to 16S rRNA central domain where it helps coordinate assembly of the platform of the 30S subunit. This Halorhodospira halophila (strain DSM 244 / SL1) (Ectothiorhodospira halophila (strain DSM 244 / SL1)) protein is Small ribosomal subunit protein uS8.